Consider the following 341-residue polypeptide: Ras association domain-containing protein 6 (341 aa).

The residue at position 155 (S155) is a Phosphoserine. The 89-residue stretch at 190–278 (YDHETSIFTP…ARIFLMDKDA (89 aa)) folds into the Ras-associating domain. Positions 285 to 332 (VAPYINFHFSFLKSILQRLDEEEKMEIERIMAKFNTERAFILKCLQSK) constitute an SARAH domain.

In terms of assembly, interacts with MOAP1. Interaction with activated KRAS is still a matter of debate.

Its function is as follows. Involved in the induction of apoptosis. May act as a Ras effector protein. May suppress the serum-induced basal levels of NF-kappa-B. This is Ras association domain-containing protein 6 (Rassf6) from Rattus norvegicus (Rat).